The sequence spans 496 residues: Fibronectin type III and SPRY domain-containing protein 1 (496 aa).

A coiled-coil region spans residues Q4–E99. Residues L105–L162 form the COS domain. In terms of domain architecture, Fibronectin type-III spans V164–F268. The B30.2/SPRY domain occupies F268 to S477. The tract at residues K301–D336 is disordered. Omega-N-methylarginine is present on residues R310 and R320.

As to quaternary structure, oligomerization is required for binding to microtubules.

It is found in the cytoplasm. The protein resides in the cytoskeleton. It localises to the microtubule organizing center. Its subcellular location is the centrosome. The protein localises to the nucleus. It is found in the cleavage furrow. Functionally, may be involved in microtubule organization and stabilization. The chain is Fibronectin type III and SPRY domain-containing protein 1 (FSD1) from Bos taurus (Bovine).